Here is a 153-residue protein sequence, read N- to C-terminus: Bacteriohemerythrin (153 aa).

The Fe cation site is built by histidine 21, histidine 57, glutamate 61, histidine 76, histidine 80, histidine 115, and aspartate 120.

Belongs to the hemerythrin family. Monomer.

In terms of biological role, oxygen-binding protein. May be involved in a storage mechanism or for delivery to oxygen-requiring enzymes. The oxygen-binding site contains two iron atoms. This Pseudomonas paraeruginosa (strain DSM 24068 / PA7) (Pseudomonas aeruginosa (strain PA7)) protein is Bacteriohemerythrin.